The primary structure comprises 397 residues: CCA-adding enzyme (397 aa).

Residues glycine 26 and arginine 29 each contribute to the ATP site. CTP contacts are provided by glycine 26 and arginine 29. Residues aspartate 39 and aspartate 41 each coordinate Mg(2+). Residues arginine 110, aspartate 153, arginine 156, arginine 159, and arginine 162 each contribute to the ATP site. CTP-binding residues include arginine 110, aspartate 153, arginine 156, arginine 159, and arginine 162.

The protein belongs to the tRNA nucleotidyltransferase/poly(A) polymerase family. Bacterial CCA-adding enzyme type 3 subfamily. As to quaternary structure, homodimer. Requires Mg(2+) as cofactor.

The enzyme catalyses a tRNA precursor + 2 CTP + ATP = a tRNA with a 3' CCA end + 3 diphosphate. The catalysed reaction is a tRNA with a 3' CCA end + 2 CTP + ATP = a tRNA with a 3' CCACCA end + 3 diphosphate. Functionally, catalyzes the addition and repair of the essential 3'-terminal CCA sequence in tRNAs without using a nucleic acid template. Adds these three nucleotides in the order of C, C, and A to the tRNA nucleotide-73, using CTP and ATP as substrates and producing inorganic pyrophosphate. tRNA 3'-terminal CCA addition is required both for tRNA processing and repair. Also involved in tRNA surveillance by mediating tandem CCA addition to generate a CCACCA at the 3' terminus of unstable tRNAs. While stable tRNAs receive only 3'-terminal CCA, unstable tRNAs are marked with CCACCA and rapidly degraded. The polypeptide is CCA-adding enzyme (Bacillus cereus (strain 03BB102)).